The chain runs to 96 residues: Antitoxin ParD4 (96 aa).

This sequence belongs to the ParD antitoxin family.

Antitoxin component of a type II toxin-antitoxin (TA) system. Neutralizes the effect of cognate toxin ParE4, but no other RelE or ParE toxin. The protein is Antitoxin ParD4 (parD4) of Caulobacter vibrioides (strain ATCC 19089 / CIP 103742 / CB 15) (Caulobacter crescentus).